Consider the following 890-residue polypeptide: Alanine--tRNA ligase (890 aa).

The Zn(2+) site is built by H567, H571, C680, and H684.

It belongs to the class-II aminoacyl-tRNA synthetase family. It depends on Zn(2+) as a cofactor.

It is found in the cytoplasm. The catalysed reaction is tRNA(Ala) + L-alanine + ATP = L-alanyl-tRNA(Ala) + AMP + diphosphate. Its function is as follows. Catalyzes the attachment of alanine to tRNA(Ala) in a two-step reaction: alanine is first activated by ATP to form Ala-AMP and then transferred to the acceptor end of tRNA(Ala). Also edits incorrectly charged Ser-tRNA(Ala) and Gly-tRNA(Ala) via its editing domain. The sequence is that of Alanine--tRNA ligase from Ruegeria pomeroyi (strain ATCC 700808 / DSM 15171 / DSS-3) (Silicibacter pomeroyi).